The primary structure comprises 245 residues: GTP cyclohydrolase 1 type 2 homolog (245 aa).

A divalent metal cation is bound by residues His-63, His-64, Asp-100, His-213, and Glu-217.

Belongs to the GTP cyclohydrolase I type 2/NIF3 family. Homohexamer.

In Archaeoglobus fulgidus (strain ATCC 49558 / DSM 4304 / JCM 9628 / NBRC 100126 / VC-16), this protein is GTP cyclohydrolase 1 type 2 homolog.